The chain runs to 359 residues: MPITIAVDAMGSDKAPTPEIEGALQAIRHFDVRVILVGKQDVLREHLGAHAHPGRLPIEIVHASEVISMHDKAALAVRSKRDSSMRVGLRLVREGKADAFVTAGNTGAAMATAKMVLGALPGVDRPALAAVFPTEKRTAAILLDVGANVDCKPQNLQQFAIMGEVYFRTVFAGKSPHARSPRVGILSIGEEETKGNELTREAYKLVKTLPLNFVGNVEGRDLFNGNVDVLVCDGFVGNVALKISEGLVKTVREMLKESLQQTIARQVGFLLSRQAFVDFKKRLDYSEYGGAPLLGLKGAAFVGHGSSNANAIKNAIRVAAEYVEHRVNEAIAREIAAASEKLGNHHSSAKKEEGEEARA.

Belongs to the PlsX family. Homodimer. Probably interacts with PlsY.

It localises to the cytoplasm. It catalyses the reaction a fatty acyl-[ACP] + phosphate = an acyl phosphate + holo-[ACP]. The protein operates within lipid metabolism; phospholipid metabolism. Its function is as follows. Catalyzes the reversible formation of acyl-phosphate (acyl-PO(4)) from acyl-[acyl-carrier-protein] (acyl-ACP). This enzyme utilizes acyl-ACP as fatty acyl donor, but not acyl-CoA. This chain is Phosphate acyltransferase, found in Koribacter versatilis (strain Ellin345).